We begin with the raw amino-acid sequence, 414 residues long: uncharacterized protein (414 aa).

It belongs to the glycosyltransferase 28 family.

This is an uncharacterized protein from Mycobacterium tuberculosis (strain CDC 1551 / Oshkosh).